The chain runs to 333 residues: Gap junction alpha-4 protein (333 aa).

The Cytoplasmic segment spans residues 1–20 (MGDWGFLEKLLDQVQEHSTV). Residues 21–40 (VGKIWLTVLFIFRILILGLA) traverse the membrane as a helical segment. Topologically, residues 41 to 76 (GESVWGDEQSDFECNTAQPGCTNVCYDQAFPISHIR) are extracellular. The chain crosses the membrane as a helical span at residues 77-99 (YWVLQFLFVSTPTLIYLGHVIYL). Residues 100 to 148 (SRREERLRQKEGELRALPSKDLHVERALAAIEHQMAKISVAEDGRLRIR) are Cytoplasmic-facing. A helical transmembrane segment spans residues 149–171 (GALMGTYVVSVLCKSVLEAGFLY). Over 172–208 (GQWRLYGWTMEPVFVCQRAPCPHIVDCYVSRPTEKTI) the chain is Extracellular. Residues 209 to 231 (FIIFMLVVGVISLVLNLLELVHL) form a helical membrane-spanning segment. Topologically, residues 232–333 (LCRCVSREIK…NSSASKKQYV (102 aa)) are cytoplasmic. Positions 292–333 (ANLTTEERLTSSRPPPFVNTAPQGGRKSPSRPNSSASKKQYV) are disordered. A compositionally biased stretch (polar residues) spans 321–333 (SRPNSSASKKQYV).

It belongs to the connexin family. Alpha-type (group II) subfamily. A connexon is composed of a hexamer of connexins. In terms of tissue distribution, highly expressed in lung.

The protein resides in the cell membrane. Its subcellular location is the cell junction. The protein localises to the gap junction. One gap junction consists of a cluster of closely packed pairs of transmembrane channels, the connexons, through which materials of low MW diffuse from one cell to a neighboring cell. This Mus musculus (Mouse) protein is Gap junction alpha-4 protein (Gja4).